The chain runs to 318 residues: E3 ubiquitin-protein ligase NRDP1 (318 aa).

The RING-type; degenerate zinc finger occupies 18 to 57 (CPICSGVLEEPVRAPHCEHAFCNACITQWFAQQQICPVDR). Residues 78–138 (KLQISCDNAG…MPNHNCIKHL (61 aa)) form an SIAH-type; degenerate zinc finger.

It catalyses the reaction S-ubiquitinyl-[E2 ubiquitin-conjugating enzyme]-L-cysteine + [acceptor protein]-L-lysine = [E2 ubiquitin-conjugating enzyme]-L-cysteine + N(6)-ubiquitinyl-[acceptor protein]-L-lysine.. The protein operates within protein modification; protein ubiquitination. Functionally, acts as E3 ubiquitin-protein ligase and regulates the degradation of target proteins. This chain is E3 ubiquitin-protein ligase NRDP1 (rnf41), found in Danio rerio (Zebrafish).